The sequence spans 1270 residues: DNA-directed RNA polymerase subunit beta (1270 aa).

It belongs to the RNA polymerase beta chain family. As to quaternary structure, the RNAP catalytic core consists of 2 alpha, 1 beta, 1 beta' and 1 omega subunit. When a sigma factor is associated with the core the holoenzyme is formed, which can initiate transcription.

The enzyme catalyses RNA(n) + a ribonucleoside 5'-triphosphate = RNA(n+1) + diphosphate. DNA-dependent RNA polymerase catalyzes the transcription of DNA into RNA using the four ribonucleoside triphosphates as substrates. This is DNA-directed RNA polymerase subunit beta from Christiangramia forsetii (strain DSM 17595 / CGMCC 1.15422 / KT0803) (Gramella forsetii).